We begin with the raw amino-acid sequence, 171 residues long: UPF0690 protein C1orf52 homolog A (171 aa).

Disordered stretches follow at residues 1-56 and 126-171; these read MAAE…GPDE and NVYQ…KRKV. The segment covering 47–56 has biased composition (basic and acidic residues); the sequence is EAKKLPGPDE. The span at 146 to 160 shows a compositional bias: acidic residues; it reads EEEAQEDSPPSDDEQ.

This sequence belongs to the UPF0690 family.

In Xenopus laevis (African clawed frog), this protein is UPF0690 protein C1orf52 homolog A.